The following is a 505-amino-acid chain: Maturase K (505 aa).

Belongs to the intron maturase 2 family. MatK subfamily.

The protein resides in the plastid. It is found in the chloroplast. In terms of biological role, usually encoded in the trnK tRNA gene intron. Probably assists in splicing its own and other chloroplast group II introns. The protein is Maturase K of Gomphrena pulchella (Globe amaranth).